The primary structure comprises 430 residues: tRNA(Ile)-lysidine synthase (430 aa).

ATP is bound at residue 27–32; that stretch reads SGGSDS.

The protein belongs to the tRNA(Ile)-lysidine synthase family.

It is found in the cytoplasm. The catalysed reaction is cytidine(34) in tRNA(Ile2) + L-lysine + ATP = lysidine(34) in tRNA(Ile2) + AMP + diphosphate + H(+). Its function is as follows. Ligates lysine onto the cytidine present at position 34 of the AUA codon-specific tRNA(Ile) that contains the anticodon CAU, in an ATP-dependent manner. Cytidine is converted to lysidine, thus changing the amino acid specificity of the tRNA from methionine to isoleucine. In Rickettsia felis (strain ATCC VR-1525 / URRWXCal2) (Rickettsia azadi), this protein is tRNA(Ile)-lysidine synthase.